We begin with the raw amino-acid sequence, 196 residues long: Probable signal peptidase I-1 (196 aa).

At 1–16 the chain is on the cytoplasmic side; that stretch reads MQNSPIPSPWQFIKEN. Residues 17-35 traverse the membrane as a helical segment; that stretch reads IPLLMVALVLALLLRFFVA. The Periplasmic portion of the chain corresponds to 36–196; sequence EPRYIPSDSM…FVPARTIINT (161 aa). Catalysis depends on residues S44 and K94.

This sequence belongs to the peptidase S26 family.

It is found in the cell membrane. It catalyses the reaction Cleavage of hydrophobic, N-terminal signal or leader sequences from secreted and periplasmic proteins.. The protein is Probable signal peptidase I-1 (lepB1) of Synechocystis sp. (strain ATCC 27184 / PCC 6803 / Kazusa).